Reading from the N-terminus, the 339-residue chain is Ribosomal RNA large subunit methyltransferase F (339 aa).

Residues 1-26 (MTAPSTPKPQRKKPKTATTAKPVVPR) are disordered.

Belongs to the methyltransferase superfamily. METTL16/RlmF family.

It localises to the cytoplasm. It catalyses the reaction adenosine(1618) in 23S rRNA + S-adenosyl-L-methionine = N(6)-methyladenosine(1618) in 23S rRNA + S-adenosyl-L-homocysteine + H(+). Functionally, specifically methylates the adenine in position 1618 of 23S rRNA. The sequence is that of Ribosomal RNA large subunit methyltransferase F from Pseudomonas fluorescens (strain SBW25).